The primary structure comprises 371 residues: Queuine tRNA-ribosyltransferase (371 aa).

Aspartate 89 (proton acceptor) is an active-site residue. Substrate contacts are provided by residues 89 to 93, aspartate 143, glutamine 185, and glycine 212; that span reads DSGGF. The segment at 243 to 249 is RNA binding; the sequence is GVGKPED. Catalysis depends on aspartate 262, which acts as the Nucleophile. Residues 267 to 271 are RNA binding; important for wobble base 34 recognition; sequence TRNAR. Residues cysteine 300, cysteine 302, cysteine 305, and histidine 331 each coordinate Zn(2+).

This sequence belongs to the queuine tRNA-ribosyltransferase family. As to quaternary structure, homodimer. Within each dimer, one monomer is responsible for RNA recognition and catalysis, while the other monomer binds to the replacement base PreQ1. Zn(2+) is required as a cofactor.

The enzyme catalyses 7-aminomethyl-7-carbaguanine + guanosine(34) in tRNA = 7-aminomethyl-7-carbaguanosine(34) in tRNA + guanine. The protein operates within tRNA modification; tRNA-queuosine biosynthesis. In terms of biological role, catalyzes the base-exchange of a guanine (G) residue with the queuine precursor 7-aminomethyl-7-deazaguanine (PreQ1) at position 34 (anticodon wobble position) in tRNAs with GU(N) anticodons (tRNA-Asp, -Asn, -His and -Tyr). Catalysis occurs through a double-displacement mechanism. The nucleophile active site attacks the C1' of nucleotide 34 to detach the guanine base from the RNA, forming a covalent enzyme-RNA intermediate. The proton acceptor active site deprotonates the incoming PreQ1, allowing a nucleophilic attack on the C1' of the ribose to form the product. After dissociation, two additional enzymatic reactions on the tRNA convert PreQ1 to queuine (Q), resulting in the hypermodified nucleoside queuosine (7-(((4,5-cis-dihydroxy-2-cyclopenten-1-yl)amino)methyl)-7-deazaguanosine). The chain is Queuine tRNA-ribosyltransferase from Pseudomonas syringae pv. tomato (strain ATCC BAA-871 / DC3000).